The following is a 227-amino-acid chain: Cytochrome c oxidase subunit 2 (227 aa).

The Mitochondrial intermembrane segment spans residues Met1 to Ser14. A helical membrane pass occupies residues Pro15–Met45. Residues Leu46 to Gln59 are Mitochondrial matrix-facing. A helical membrane pass occupies residues Glu60–Met87. The Mitochondrial intermembrane segment spans residues Asp88 to Leu227. Cu cation contacts are provided by His161, Cys196, Glu198, Cys200, His204, and Met207. Glu198 contributes to the Mg(2+) binding site.

The protein belongs to the cytochrome c oxidase subunit 2 family. In terms of assembly, component of the cytochrome c oxidase (complex IV, CIV), a multisubunit enzyme composed of 14 subunits. The complex is composed of a catalytic core of 3 subunits MT-CO1, MT-CO2 and MT-CO3, encoded in the mitochondrial DNA, and 11 supernumerary subunits COX4I, COX5A, COX5B, COX6A, COX6B, COX6C, COX7A, COX7B, COX7C, COX8 and NDUFA4, which are encoded in the nuclear genome. The complex exists as a monomer or a dimer and forms supercomplexes (SCs) in the inner mitochondrial membrane with NADH-ubiquinone oxidoreductase (complex I, CI) and ubiquinol-cytochrome c oxidoreductase (cytochrome b-c1 complex, complex III, CIII), resulting in different assemblies (supercomplex SCI(1)III(2)IV(1) and megacomplex MCI(2)III(2)IV(2)). Found in a complex with TMEM177, COA6, COX18, COX20, SCO1 and SCO2. Interacts with TMEM177 in a COX20-dependent manner. Interacts with COX20. Interacts with COX16. It depends on Cu cation as a cofactor.

It is found in the mitochondrion inner membrane. The catalysed reaction is 4 Fe(II)-[cytochrome c] + O2 + 8 H(+)(in) = 4 Fe(III)-[cytochrome c] + 2 H2O + 4 H(+)(out). Functionally, component of the cytochrome c oxidase, the last enzyme in the mitochondrial electron transport chain which drives oxidative phosphorylation. The respiratory chain contains 3 multisubunit complexes succinate dehydrogenase (complex II, CII), ubiquinol-cytochrome c oxidoreductase (cytochrome b-c1 complex, complex III, CIII) and cytochrome c oxidase (complex IV, CIV), that cooperate to transfer electrons derived from NADH and succinate to molecular oxygen, creating an electrochemical gradient over the inner membrane that drives transmembrane transport and the ATP synthase. Cytochrome c oxidase is the component of the respiratory chain that catalyzes the reduction of oxygen to water. Electrons originating from reduced cytochrome c in the intermembrane space (IMS) are transferred via the dinuclear copper A center (CU(A)) of subunit 2 and heme A of subunit 1 to the active site in subunit 1, a binuclear center (BNC) formed by heme A3 and copper B (CU(B)). The BNC reduces molecular oxygen to 2 water molecules using 4 electrons from cytochrome c in the IMS and 4 protons from the mitochondrial matrix. The polypeptide is Cytochrome c oxidase subunit 2 (MT-CO2) (Sciurus carolinensis (Eastern gray squirrel)).